A 382-amino-acid chain; its full sequence is Galactokinase (382 aa).

Residue 34–37 (EHTD) coordinates substrate. Residue 124 to 130 (GAGLSSS) coordinates ATP. S130 and E162 together coordinate Mg(2+). D174 serves as the catalytic Proton acceptor. Residue Y223 coordinates substrate.

The protein belongs to the GHMP kinase family. GalK subfamily.

It is found in the cytoplasm. It catalyses the reaction alpha-D-galactose + ATP = alpha-D-galactose 1-phosphate + ADP + H(+). It participates in carbohydrate metabolism; galactose metabolism. Its function is as follows. Catalyzes the transfer of the gamma-phosphate of ATP to D-galactose to form alpha-D-galactose-1-phosphate (Gal-1-P). The protein is Galactokinase of Shigella boydii serotype 4 (strain Sb227).